A 492-amino-acid polypeptide reads, in one-letter code: Histone-lysine N-methyltransferase PRDM7 (492 aa).

Residues 1 to 22 (MSPERSQEESPEGDTERTERKP) are disordered. One can recognise a KRAB-related domain in the interval 23-86 (MVKDAFKDIS…RRQAIKLQVD (64 aa)). Positions 111-179 (EQSKHQKGMP…ELRRKETEGK (69 aa)) are disordered. Over residues 135–150 (GTPNLLNTSDSEQAQK) the composition is skewed to polar residues. Residues 167–179 (LKLELRRKETEGK) are compositionally biased toward basic and acidic residues. Residues 244–358 (PGLRIGPSGI…PGCELLVWSG (115 aa)) form the SET domain.

It localises to the nucleus. The protein resides in the chromosome. It catalyses the reaction N(6),N(6)-dimethyl-L-lysyl(4)-[histone H3] + S-adenosyl-L-methionine = N(6),N(6),N(6)-trimethyl-L-lysyl(4)-[histone H3] + S-adenosyl-L-homocysteine + H(+). Functionally, histone methyltransferase that selectively methylates 'Lys-4' of dimethylated histone H3 (H3K4me2) to produce trimethylated 'Lys-4' histone H3 (H3K4me3). May play a role in epigenetic regulation of gene expression by defining an active chromatin state. The protein is Histone-lysine N-methyltransferase PRDM7 of Homo sapiens (Human).